A 408-amino-acid polypeptide reads, in one-letter code: CinA-like protein (408 aa).

It belongs to the CinA family.

In Anaeromyxobacter sp. (strain K), this protein is CinA-like protein.